A 535-amino-acid chain; its full sequence is MSTKYIFVTGGVVSSIGKGIVAASLGRLLKNRGLKVTIQKFDPYINIDPGTMSPYQHGEVFVTDDGAETDLDLGHYERFIDINLNKYSNVTTGKIYSEVLRKERRGEYLGATVQVIPHITDALKEKIKRAALTTDSDVIITEVGGTVGDIESLPFLEALRQMKADVGADNVMYIHTTLLPYLKAAGEMKTKPTQHSVKELRGLGIQPNMLVIRTEEPAGQGIKNKLAQFCDVAPEAVIESLDVEHLYQIPLNLQAQGMDQIVCDHLKLDAPAADMTEWSAMVDKVMNLKKQVKISLVGKYVELQDAYISVVEALKHSGYVNDVEVKINWVNANDVTAENVAELLSDADGIIVPGGFGQRGTEGKIQAIRYARENDVPMLGVCLGMQLTCIEFARHVLGLEGANSAELAPETKYPIIDIMRDQIDIEDMGGTLRLGLYPSKLKRGSKAAAAYHNQEVVQRRHRHRYEFNNAFREQFEAAGFVFSGVSPDNRLVEIVEIPENKFFVACQYHPELSSRPNRPEELYTAFVTAAVENSN.

An amidoligase domain region spans residues 1–268 (MSTKYIFVTG…DQIVCDHLKL (268 aa)). Residue S14 coordinates CTP. S14 provides a ligand contact to UTP. 15-20 (SIGKGI) contacts ATP. Y55 is a binding site for L-glutamine. D72 provides a ligand contact to ATP. 2 residues coordinate Mg(2+): D72 and E142. CTP is bound by residues 149–151 (DIE), 189–194 (KTKPTQ), and K225. UTP is bound by residues 189–194 (KTKPTQ) and K225. In terms of domain architecture, Glutamine amidotransferase type-1 spans 293–535 (KISLVGKYVE…FVTAAVENSN (243 aa)). L-glutamine is bound at residue G355. The active-site Nucleophile; for glutamine hydrolysis is the C382. Residues 383-386 (LGMQ), E406, and R464 contribute to the L-glutamine site. Residues H509 and E511 contribute to the active site.

Belongs to the CTP synthase family. As to quaternary structure, homotetramer.

The catalysed reaction is UTP + L-glutamine + ATP + H2O = CTP + L-glutamate + ADP + phosphate + 2 H(+). It carries out the reaction L-glutamine + H2O = L-glutamate + NH4(+). It catalyses the reaction UTP + NH4(+) + ATP = CTP + ADP + phosphate + 2 H(+). It functions in the pathway pyrimidine metabolism; CTP biosynthesis via de novo pathway; CTP from UDP: step 2/2. Its activity is regulated as follows. Allosterically activated by GTP, when glutamine is the substrate; GTP has no effect on the reaction when ammonia is the substrate. The allosteric effector GTP functions by stabilizing the protein conformation that binds the tetrahedral intermediate(s) formed during glutamine hydrolysis. Inhibited by the product CTP, via allosteric rather than competitive inhibition. Functionally, catalyzes the ATP-dependent amination of UTP to CTP with either L-glutamine or ammonia as the source of nitrogen. Regulates intracellular CTP levels through interactions with the four ribonucleotide triphosphates. The polypeptide is CTP synthase (Streptococcus pneumoniae (strain ATCC BAA-255 / R6)).